The primary structure comprises 609 residues: UvrABC system protein C (609 aa).

One can recognise a GIY-YIG domain in the interval 16-94 (SSAGVYRMYD…IKQYMPKYNV (79 aa)). Residues 203–238 (QQVISALVDKMELAAERQAYEQAARFRDQIMALRKV) enclose the UVR domain.

Belongs to the UvrC family. As to quaternary structure, interacts with UvrB in an incision complex.

It localises to the cytoplasm. The UvrABC repair system catalyzes the recognition and processing of DNA lesions. UvrC both incises the 5' and 3' sides of the lesion. The N-terminal half is responsible for the 3' incision and the C-terminal half is responsible for the 5' incision. The sequence is that of UvrABC system protein C from Shewanella baltica (strain OS195).